The sequence spans 631 residues: Dolichyl-diphosphooligosaccharide--protein glycosyltransferase subunit 2 (631 aa).

A signal peptide spans 1-22; it reads MASPGASTVFLLALTILAGTQA. The Lumenal segment spans residues 23–540; sequence LTPTHYLTKP…REPEKRPPTV (518 aa). N-linked (GlcNAc...) asparagine glycosylation is present at N106. K154 is covalently cross-linked (Glycyl lysine isopeptide (Lys-Gly) (interchain with G-Cter in ubiquitin)). The chain crosses the membrane as a helical span at residues 541–561; sequence VSNTFTALILSPLLLLFALWI. Residues 562–571 lie on the Cytoplasmic side of the membrane; sequence RIGANVSNFT. The helical transmembrane segment at 572–592 threads the bilayer; the sequence is FAPSTIIFHLGHAAMLGLMYV. The Lumenal portion of the chain corresponds to 593–596; the sequence is YWTQ. Residues 597-617 form a helical membrane-spanning segment; sequence LNMFQTLKYLAILGSVTFLAG. At 618 to 631 the chain is on the cytoplasmic side; that stretch reads NRMLAQQAIKRTAH.

It belongs to the SWP1 family. As to quaternary structure, component of the oligosaccharyltransferase (OST) complex. OST exists in two different complex forms which contain common core subunits RPN1, RPN2, OST48, OST4, DAD1 and TMEM258, either STT3A or STT3B as catalytic subunits, and form-specific accessory subunits. STT3A complex assembly occurs through the formation of 3 subcomplexes. Subcomplex 1 contains RPN1 and TMEM258, subcomplex 2 contains the STT3A-specific subunits STT3A, DC2/OSTC, and KCP2 as well as the core subunit OST4, and subcomplex 3 contains RPN2, DAD1, and OST48. The STT3A complex can form stable complexes with the Sec61 complex or with both the Sec61 and TRAP complexes. Interacts with DDI2. Interacts with TMEM35A/NACHO.

It localises to the endoplasmic reticulum. The protein resides in the endoplasmic reticulum membrane. It functions in the pathway protein modification; protein glycosylation. Subunit of the oligosaccharyl transferase (OST) complex that catalyzes the initial transfer of a defined glycan (Glc(3)Man(9)GlcNAc(2) in eukaryotes) from the lipid carrier dolichol-pyrophosphate to an asparagine residue within an Asn-X-Ser/Thr consensus motif in nascent polypeptide chains, the first step in protein N-glycosylation. N-glycosylation occurs cotranslationally and the complex associates with the Sec61 complex at the channel-forming translocon complex that mediates protein translocation across the endoplasmic reticulum (ER). All subunits are required for a maximal enzyme activity. The polypeptide is Dolichyl-diphosphooligosaccharide--protein glycosyltransferase subunit 2 (Canis lupus familiaris (Dog)).